Consider the following 500-residue polypeptide: Metacaspase-5 (500 aa).

An N-terminal signal peptide occupies residues 1-18; sequence MDAALALLFGQVATAVLP. The interval 19–63 is important for catalytic activity; the sequence is YVVNSIGRVPRPKRVDVKKAMGEAHQCRPVVPYRAPRPYTEGRVK. Residues N70 and N113 are each glycosylated (N-linked (GlcNAc...) asparagine). H147 is an active-site residue. The Ca(2+) site is built by D162, D178, and D179. Residue C202 is part of the active site. D209 contacts Ca(2+). N-linked (GlcNAc...) asparagine glycosylation is found at N219, N235, N258, N264, N283, and N332. 2 disordered regions span residues 358 to 419 and 444 to 500; these read EATL…QAYY and QPPQ…PGRK. Residues 379–389 show a composition bias toward polar residues; it reads ASTSNGKSNPG. The span at 444-461 shows a compositional bias: low complexity; the sequence is QPPQQAYYQPPQQAYYQP.

Belongs to the peptidase C14B family.

It localises to the recycling endosome. Functionally, cysteine protease that cleaves specifically after arginine or lysine residues. The polypeptide is Metacaspase-5 (Trypanosoma brucei brucei).